We begin with the raw amino-acid sequence, 103 residues long: L-rhamnose mutarotase (103 aa).

Tyr18 contacts substrate. The active-site Proton donor is His22. Residues Tyr41 and 76 to 77 contribute to the substrate site; that span reads WW.

It belongs to the rhamnose mutarotase family. In terms of assembly, homodimer.

The protein resides in the cytoplasm. The enzyme catalyses alpha-L-rhamnose = beta-L-rhamnose. It participates in carbohydrate metabolism; L-rhamnose metabolism. Its function is as follows. Involved in the anomeric conversion of L-rhamnose. This Enterococcus faecalis (strain ATCC 700802 / V583) protein is L-rhamnose mutarotase.